A 267-amino-acid polypeptide reads, in one-letter code: MKKVTIRDFIKKKSTKEKITMLTAYDYPTAKIISNTGLDSILVGDSLGMVVLGYANTLNVTMRDMISHTRAVARANPPQLIVADMPFLSYEIDTKSAIKNAGLLVKAGSDAIKLEGGEEMKDTVKAIVKAGIPVMGHIGLTPQRFLRLGGFRTIGKTKQEEDQLIKDSLELEDAGVFSLVIENTYVDIAKRITEKLNIPTICIGAGPYCDGQVLVINDLLGLSEFTPYFAKSYVNLKEIISNAINQYIIDVKNNKFPEKQHYKERES.

Mg(2+) is bound by residues D45 and D84. 3-methyl-2-oxobutanoate contacts are provided by residues 45-46 (DS), D84, and K113. E115 provides a ligand contact to Mg(2+). E182 (proton acceptor) is an active-site residue.

Belongs to the PanB family. As to quaternary structure, homodecamer; pentamer of dimers. Mg(2+) serves as cofactor.

The protein resides in the cytoplasm. The catalysed reaction is 3-methyl-2-oxobutanoate + (6R)-5,10-methylene-5,6,7,8-tetrahydrofolate + H2O = 2-dehydropantoate + (6S)-5,6,7,8-tetrahydrofolate. It functions in the pathway cofactor biosynthesis; coenzyme A biosynthesis. Its function is as follows. Catalyzes the reversible reaction in which hydroxymethyl group from 5,10-methylenetetrahydrofolate is transferred onto alpha-ketoisovalerate to form ketopantoate. This is 3-methyl-2-oxobutanoate hydroxymethyltransferase from Saccharolobus islandicus (strain L.S.2.15 / Lassen #1) (Sulfolobus islandicus).